A 621-amino-acid chain; its full sequence is Chaperone protein HtpG (621 aa).

Residues 1-328 (MIQEKKKFDA…SEDLPLNISR (328 aa)) are a; substrate-binding. Residues 329–544 (ESLQHNSVLE…DAAMDIRMER (216 aa)) are b. The segment at 475–494 (SDIDVEQTTSQSEAKNTDSK) is disordered. A c region spans residues 545–621 (FLIEQKQIAN…LNDIVQKAIL (77 aa)).

The protein belongs to the heat shock protein 90 family. Homodimer.

The protein localises to the cytoplasm. In terms of biological role, molecular chaperone. Has ATPase activity. The chain is Chaperone protein HtpG from Rickettsia rickettsii (strain Iowa).